A 1168-amino-acid polypeptide reads, in one-letter code: Probable pre-mRNA-splicing factor ATP-dependent RNA helicase DEAH5 (1168 aa).

The tract at residues 76-206 is disordered; the sequence is IYPPKPKSEK…KDEYVEEDKG (131 aa). Basic and acidic residues-rich tracts occupy residues 81–172 and 180–206; these read PKSE…DRRS and GRGDGGEGEDRRRDRRAKDEYVEEDKG. In terms of domain architecture, S1 motif spans 214 to 283; that stretch reads YQVYKGRVTR…SSDKYSLSMR (70 aa). Residues 289–326 form a disordered region; the sequence is TGRDLIPLRKPSDEDDSSRSNPSYRTKDGQVTKTGISG. Residue serine 411 is modified to Phosphoserine. The region spanning 525–688 is the Helicase ATP-binding domain; it reads IQAVHDNQVL…FFNCNIFTIP (164 aa). ATP is bound at residue 538–545; it reads GETGSGKT. The short motif at 635-638 is the DEAH box element; it reads DEAH. A Helicase C-terminal domain is found at 706 to 886; it reads YLDAALITVL…MTTLTMKAMG (181 aa).

It belongs to the DEAD box helicase family. DEAH subfamily. PRP22 sub-subfamily.

It localises to the nucleus. The enzyme catalyses ATP + H2O = ADP + phosphate + H(+). Its function is as follows. May be involved in pre-mRNA splicing. The sequence is that of Probable pre-mRNA-splicing factor ATP-dependent RNA helicase DEAH5 from Arabidopsis thaliana (Mouse-ear cress).